A 58-amino-acid chain; its full sequence is Mastoparan-VT7 (58 aa).

Residues 1–27 (MKNTILILFTAFIALLGFFGMSAEALA) form the signal peptide. AXPX repeat units follow at residues 27–30 (ADPK), 31–34 (ADPL), 35–38 (AGPN), and 41–44 (ADPE). The propeptide occupies 28–45 (DPKADPLAGPNPDADPEA).

Belongs to the MCD family. Mastoparan subfamily. In terms of tissue distribution, expressed by the venom gland.

The protein localises to the secreted. Functionally, the synthetic peptide shows antimicrobial activities against Gram-negative bacteria (but not against all strains tested), Gram-positive bacteria (all strains tested) and the fungi C.albicans (but not C.parapsilosis). Exhibits little hemolytic activity against washed human erythrocytes. The polypeptide is Mastoparan-VT7 (Vespa tropica (Greater banded hornet)).